A 331-amino-acid chain; its full sequence is Hyaluronidase (331 aa).

Intrachain disulfides connect Cys-19–Cys-308 and Cys-185–Cys-197. N-linked (GlcNAc...) asparagine glycosylation occurs at Asn-79. Glu-109 acts as the Proton donor in catalysis. A glycan (N-linked (GlcNAc...) asparagine) is linked at Asn-325.

It belongs to the glycosyl hydrolase 56 family. Expressed by the venom gland.

The protein resides in the secreted. It carries out the reaction Random hydrolysis of (1-&gt;4)-linkages between N-acetyl-beta-D-glucosamine and D-glucuronate residues in hyaluronate.. In terms of biological role, hydrolyzes high molecular weight hyaluronic acid to produce small oligosaccharides. The polypeptide is Hyaluronidase (Dolichovespula maculata (Bald-faced hornet)).